Here is a 1481-residue protein sequence, read N- to C-terminus: Coiled-coil domain-containing protein 88B (1481 aa).

2 coiled-coil regions span residues 200-225 and 258-491; these read ELVA…RERD and SHHL…GSQH. 3 disordered regions span residues 430 to 458, 494 to 731, and 1331 to 1481; these read ELQR…QDEV, LEEQ…AIPE, and PRRE…SLSQ. Ser-441 bears the Phosphoserine mark. Polar residues-rich tracts occupy residues 542–557 and 568–590; these read ASYS…SQAP and QMVS…TVET. The residue at position 649 (Ser-649) is a Phosphoserine. Basic and acidic residues predominate over residues 660-695; the sequence is TLREPLKDQKALDRELELSKQQKETGRHEQRPKGLE. Positions 731 to 1308 form a coiled coil; it reads EEQALRDEVA…KIMDQYRVLE (578 aa). Phosphoserine occurs at positions 1353 and 1384. The span at 1371–1386 shows a compositional bias: polar residues; that stretch reads TGSSSPAPMRRVQSSL. Positions 1453–1472 are enriched in basic and acidic residues; sequence LSEHEADDTREAFQEQKPEK.

It belongs to the CCDC88 family. Homodimer. Interacts with DOCK8. Interacts (via C-terminus) with intact microtubules. Interacts with dynein-dynactin motor complex. Interacts (via C-terminus) with HSPA5. Abundantly expressed in immune cells, including both CD4(+) and CD8(+) T-cells and in myeloid cells (at protein level). Expressed in endothelium (at protein level). Expressed specifically in spleen, bone marrow, lymph nodes and thymus. Expressed in liver and heart.

It is found in the membrane. The protein resides in the cytoplasm. Its subcellular location is the cytoskeleton. The protein localises to the microtubule organizing center. It localises to the endoplasmic reticulum. It is found in the golgi apparatus. Its function is as follows. Acts as a positive regulator of T-cell maturation and inflammatory function. Required for several functions of T-cells in both the CD4(+) and the CD8(+) compartments and this includes expression of cell surface markers of activation, proliferation, and cytokine production in response to specific or non-specific stimulation and during the course of infection with the mouse malaria parasite Plasmodium berghei. Enhances NK cell cytotoxicity by positively regulating polarization of microtubule-organizing center (MTOC) to cytotoxic synapse, lytic granule transport along microtubules, and dynein-mediated clustering to MTOC. Interacts with HSPA5 and stabilizes the interaction between HSPA5 and ERN1, leading to suppression of ERN1-induced JNK activation and endoplasmic reticulum stress-induced apoptosis. The protein is Coiled-coil domain-containing protein 88B (Ccdc88b) of Mus musculus (Mouse).